A 362-amino-acid polypeptide reads, in one-letter code: Abnormal cell migration protein 13 (362 aa).

Residues 1-20 (MTKLLIALILFSICWKPYSA) form the signal peptide. Over 21-237 (EPIASFFDGL…ELDPLTTVSG (217 aa)) the chain is Extracellular. 2 disulfides stabilise this stretch: Cys36-Cys68 and Cys98-Cys136. In terms of domain architecture, CUB spans 36 to 175 (CKARLDRRLT…KGFKLHWGSF (140 aa)). The N-linked (GlcNAc...) asparagine glycan is linked to Asn63. Asn145 and Asn161 each carry an N-linked (GlcNAc...) asparagine glycan. The LDL-receptor class A domain maps to 182–225 (NCVTGEFSCGNGECIPIESACDRFADCSNGEDLIHSRQMAANCQ). 3 disulfide bridges follow: Cys183–Cys195, Cys190–Cys208, and Cys202–Cys224. The chain crosses the membrane as a helical span at residues 238 to 258 (VFVLLFSATIILSLCGFIMFV). The Cytoplasmic portion of the chain corresponds to 259–362 (CCLCKCLKST…VRNDVHRNLL (104 aa)). Positions 275 to 311 (SSHTTTTTATDYKPDPPQFYPPSPPKMPPPSAASSYT) are disordered. Residues 289 to 305 (DPPQFYPPSPPKMPPPS) are compositionally biased toward pro residues.

As to quaternary structure, interacts with abl-1 (via SH2 and SH3 domains); the interaction is direct. Interacts with sem-5; the interaction is direct. As to expression, expressed in pharyngeal-intestinal valve cells and ventral cord neurons.

It localises to the cell membrane. The protein resides in the perikaryon. The protein localises to the cell projection. Its subcellular location is the axon. It is found in the dendrite. In terms of biological role, probable receptor that acts as an upstream signaling protein to promote the guidance, migration and positioning of the right Q neuroblast (QR) and its descendants along the anteroposterior body axis, and also the anterior migration of BDU interneurons during larval development. Associates with and recruits the downstream components tyrosine kinase abl-1 and the tyrosine kinase adapter protein sem-5 to the leading edge of migrating Q neuroblasts and their descendants to activate signaling through the two parallel wve-1 and wsp-1 pathways, respectively, and direct migration along the anteroposterior body axis. Involved in cytoskeleton dynamics regulating the organization of the actin cytoskeleton at the leading edge of migrating cells to ensure correct Q cell polarity and promote migration. Role in cytoskeleton organization may be by activation of the wve-1 and wsp-1 pathways which recruit the Arp2/3 complex to the leading edge of migrating cells. Plays a role in regulating the asymmetric distribution of the actin cytoskeleton-binding protein cor-1 in Q neuroblasts which is required for the anterior migration of QR neuroblasts. The protein is Abnormal cell migration protein 13 of Caenorhabditis elegans.